Reading from the N-terminus, the 240-residue chain is 2,3,4,5-tetrahydropyridine-2,6-dicarboxylate N-acetyltransferase (240 aa).

Belongs to the transferase hexapeptide repeat family. DapH subfamily.

The enzyme catalyses (S)-2,3,4,5-tetrahydrodipicolinate + acetyl-CoA + H2O = L-2-acetamido-6-oxoheptanedioate + CoA. Its pathway is amino-acid biosynthesis; L-lysine biosynthesis via DAP pathway; LL-2,6-diaminopimelate from (S)-tetrahydrodipicolinate (acetylase route): step 1/3. Its function is as follows. Catalyzes the transfer of an acetyl group from acetyl-CoA to tetrahydrodipicolinate. The polypeptide is 2,3,4,5-tetrahydropyridine-2,6-dicarboxylate N-acetyltransferase (Bacillus mycoides (strain KBAB4) (Bacillus weihenstephanensis)).